The chain runs to 751 residues: Methionine--tRNA ligase, cytoplasmic (751 aa).

S2 is modified (N-acetylserine). The interval 36–92 (LKPEVDNDNAAMELRNTKEPFLLFDANAILRYVMDDFEGQTSDKYQFALASLQNLLY) is interaction with ARC1. A 'HIGH' region motif is present at residues 205–215 (PYVNNVPHLGN). K411 serves as a coordination point for ATP. A 'KMSKS' region motif is present at residues 525–529 (KFSKS).

The protein belongs to the class-I aminoacyl-tRNA synthetase family. In terms of assembly, component of a yeast aminoacyl-tRNA synthase (aaRS) complex formed by methionyl-tRNA synthase MES1, glutamyl-tRNA synthase GUS1 and the tRNA aminoacylation cofactor ARC1 in a stoichiometric complex. Interacts (via N-ter) with ARC1 (via N-ter). Can also form a stable binary complex with ARC1 that is functional in terms of aminoacylation. ARC1 increases the affinity for cognate tRNAs due to the presence of a tRNA binding domain in the middle and C-terminal part of ARC1.

The protein localises to the cytoplasm. The enzyme catalyses tRNA(Met) + L-methionine + ATP = L-methionyl-tRNA(Met) + AMP + diphosphate. Its function is as follows. Catalyzes the attachment of methionine to tRNA(Met) in a two-step reaction: methionine is first activated by ATP to form Met-AMP and then transferred to the acceptor end of tRNA(Met). This is Methionine--tRNA ligase, cytoplasmic (MES1) from Saccharomyces cerevisiae (strain ATCC 204508 / S288c) (Baker's yeast).